A 327-amino-acid chain; its full sequence is Beta-ketoacyl-[acyl-carrier-protein] synthase III 2 (327 aa).

Catalysis depends on residues C114 and H251. An ACP-binding region spans residues 252–256 (SANLR). Residue N281 is part of the active site.

This sequence belongs to the thiolase-like superfamily. FabH family. As to quaternary structure, homodimer.

The protein localises to the cytoplasm. It carries out the reaction malonyl-[ACP] + acetyl-CoA + H(+) = 3-oxobutanoyl-[ACP] + CO2 + CoA. It functions in the pathway lipid metabolism; fatty acid biosynthesis. In terms of biological role, catalyzes the condensation reaction of fatty acid synthesis by the addition to an acyl acceptor of two carbons from malonyl-ACP. Catalyzes the first condensation reaction which initiates fatty acid synthesis and may therefore play a role in governing the total rate of fatty acid production. Possesses both acetoacetyl-ACP synthase and acetyl transacylase activities. Its substrate specificity determines the biosynthesis of branched-chain and/or straight-chain of fatty acids. The polypeptide is Beta-ketoacyl-[acyl-carrier-protein] synthase III 2 (Bacillus anthracis).